Here is a 502-residue protein sequence, read N- to C-terminus: 2-isopropylmalate synthase (502 aa).

Asp-1, His-189, His-191, and Asn-225 together coordinate Mn(2+). The region spanning 1–254 (DGEQALQASL…STNINYKEIY (254 aa)) is the Pyruvate carboxyltransferase domain. The tract at residues 379 to 502 (CLKFFSVQSI…VNKKLQELKK (124 aa)) is regulatory domain.

Belongs to the alpha-IPM synthase/homocitrate synthase family. LeuA type 1 subfamily. In terms of assembly, homodimer. Mn(2+) serves as cofactor.

The protein localises to the cytoplasm. It catalyses the reaction 3-methyl-2-oxobutanoate + acetyl-CoA + H2O = (2S)-2-isopropylmalate + CoA + H(+). It participates in amino-acid biosynthesis; L-leucine biosynthesis; L-leucine from 3-methyl-2-oxobutanoate: step 1/4. Its function is as follows. Catalyzes the condensation of the acetyl group of acetyl-CoA with 3-methyl-2-oxobutanoate (2-ketoisovalerate) to form 3-carboxy-3-hydroxy-4-methylpentanoate (2-isopropylmalate). The chain is 2-isopropylmalate synthase from Buchnera aphidicola subsp. Macrosiphoniella ludovicianae.